We begin with the raw amino-acid sequence, 32 residues long: RADTQTYQPYNKDWIKEKIYVLLRRQAQQAGK.

This sequence belongs to the E(R) family. In terms of assembly, homodimer. Component of the methylosome, a 20S complex containing at least CLNS1A/pICln, PRMT5/SKB1, WDR77/MEP50, PRMT1 and ERH. Interacts with CHTOP.

Its subcellular location is the nucleus. Functionally, may have a role in the cell cycle. Its function is as follows. AP 3910 has antibacterial activity against B.megaterium. The polypeptide is Enhancer of rudimentary homolog (ERH) (Sus scrofa (Pig)).